An 896-amino-acid chain; its full sequence is Glutamate receptor 2.4 (896 aa).

Residues 1 to 24 (MKRHLNDVVLVFLVFIFGVKLGKG) form the signal peptide. Residues 25-565 (QNTTIQVINV…SSLIFFKPLT (541 aa)) lie on the Extracellular side of the membrane. Asn-26, Asn-46, Asn-53, Asn-204, Asn-267, Asn-331, Asn-341, and Asn-527 each carry an N-linked (GlcNAc...) asparagine glycan. A helical membrane pass occupies residues 566-586 (PGLWGMTLGSFFVVGFVVWIL). Residues 587–595 (EHRVNSEFT) are Cytoplasmic-facing. The helical transmembrane segment at 596–616 (GPPQYQISTMFWFAFSIMVFA) threads the bilayer. The Cytoplasmic portion of the chain corresponds to 617–620 (PRER). The helical transmembrane segment at 621–641 (VMSFTARVVVITWYFIVLVLT) threads the bilayer. Residues 642 to 815 (QSYTASLSSL…VSFRKLSLDS (174 aa)) are Extracellular-facing. A helical transmembrane segment spans residues 816–836 (FLLLFVAAATVCTLALLKFVI). Topologically, residues 837 to 896 (CFLIQNRIILNDEFYRGKRMKEMWLKFMESDGESYISRVRSTCPQVLIQPREEDIDPING) are cytoplasmic.

It belongs to the glutamate-gated ion channel (TC 1.A.10.1) family. In terms of assembly, may form heteromers. As to expression, expressed predominantly in roots.

It is found in the membrane. Its function is as follows. Glutamate-gated receptor that probably acts as a non-selective cation channel. May be involved in light-signal transduction and calcium homeostasis via the regulation of calcium influx into cells. The protein is Glutamate receptor 2.4 (GLR2.4) of Arabidopsis thaliana (Mouse-ear cress).